A 122-amino-acid polypeptide reads, in one-letter code: Large ribosomal subunit protein uL18 (122 aa).

Belongs to the universal ribosomal protein uL18 family. In terms of assembly, part of the 50S ribosomal subunit; part of the 5S rRNA/L5/L18/L25 subcomplex. Contacts the 5S and 23S rRNAs.

Functionally, this is one of the proteins that bind and probably mediate the attachment of the 5S RNA into the large ribosomal subunit, where it forms part of the central protuberance. The protein is Large ribosomal subunit protein uL18 of Thermotoga neapolitana (strain ATCC 49049 / DSM 4359 / NBRC 107923 / NS-E).